A 312-amino-acid chain; its full sequence is Cytochrome f (312 aa).

The N-terminal stretch at 1-30 (MYLSKNFFLNLKTFIFSFFVLCFFSQSAQA) is a signal peptide. Tyr-31, Cys-51, Cys-54, and His-55 together coordinate heme. Residues 278-298 (VQGLLLFSLFILLAQIFLVLK) form a helical membrane-spanning segment.

It belongs to the cytochrome f family. The 4 large subunits of the cytochrome b6-f complex are cytochrome b6, subunit IV (17 kDa polypeptide, petD), cytochrome f and the Rieske protein, while the 4 small subunits are PetG, PetL, PetM and PetN. The complex functions as a dimer. The cofactor is heme.

It is found in the plastid. The protein resides in the chloroplast thylakoid membrane. Functionally, component of the cytochrome b6-f complex, which mediates electron transfer between photosystem II (PSII) and photosystem I (PSI), cyclic electron flow around PSI, and state transitions. This chain is Cytochrome f (petA), found in Bigelowiella natans (Pedinomonas minutissima).